We begin with the raw amino-acid sequence, 266 residues long: Hydroxymethylpyrimidine/phosphomethylpyrimidine kinase (266 aa).

Residue Gln-43 coordinates 4-amino-5-hydroxymethyl-2-methylpyrimidine.

This sequence belongs to the ThiD family.

It catalyses the reaction 4-amino-5-hydroxymethyl-2-methylpyrimidine + ATP = 4-amino-2-methyl-5-(phosphooxymethyl)pyrimidine + ADP + H(+). It carries out the reaction 4-amino-2-methyl-5-(phosphooxymethyl)pyrimidine + ATP = 4-amino-2-methyl-5-(diphosphooxymethyl)pyrimidine + ADP. It functions in the pathway cofactor biosynthesis; thiamine diphosphate biosynthesis; 4-amino-2-methyl-5-diphosphomethylpyrimidine from 5-amino-1-(5-phospho-D-ribosyl)imidazole: step 2/3. The protein operates within cofactor biosynthesis; thiamine diphosphate biosynthesis; 4-amino-2-methyl-5-diphosphomethylpyrimidine from 5-amino-1-(5-phospho-D-ribosyl)imidazole: step 3/3. Its function is as follows. Catalyzes the phosphorylation of hydroxymethylpyrimidine phosphate (HMP-P) to HMP-PP, and of HMP to HMP-P. The chain is Hydroxymethylpyrimidine/phosphomethylpyrimidine kinase (thiD) from Rhizobium meliloti (strain 1021) (Ensifer meliloti).